The chain runs to 62 residues: Photosystem II reaction center protein Z (62 aa).

2 helical membrane passes run 8–28 (AVFA…VVFA) and 41–61 (FSGT…NSLI).

This sequence belongs to the PsbZ family. PSII is composed of 1 copy each of membrane proteins PsbA, PsbB, PsbC, PsbD, PsbE, PsbF, PsbH, PsbI, PsbJ, PsbK, PsbL, PsbM, PsbT, PsbY, PsbZ, Psb30/Ycf12, at least 3 peripheral proteins of the oxygen-evolving complex and a large number of cofactors. It forms dimeric complexes.

It localises to the plastid. The protein resides in the chloroplast thylakoid membrane. Its function is as follows. May control the interaction of photosystem II (PSII) cores with the light-harvesting antenna, regulates electron flow through the 2 photosystem reaction centers. PSII is a light-driven water plastoquinone oxidoreductase, using light energy to abstract electrons from H(2)O, generating a proton gradient subsequently used for ATP formation. This Coffea arabica (Arabian coffee) protein is Photosystem II reaction center protein Z.